Here is a 404-residue protein sequence, read N- to C-terminus: Cysteine desulfurase IscS (404 aa).

Pyridoxal 5'-phosphate is bound by residues 75–76 (AT), Asn-155, Gln-183, and 203–205 (SAH). At Lys-206 the chain carries N6-(pyridoxal phosphate)lysine. Thr-243 provides a ligand contact to pyridoxal 5'-phosphate. Cys-328 serves as the catalytic Cysteine persulfide intermediate. Position 328 (Cys-328) interacts with [2Fe-2S] cluster.

Belongs to the class-V pyridoxal-phosphate-dependent aminotransferase family. NifS/IscS subfamily. Homodimer. Forms a heterotetramer with IscU, interacts with other sulfur acceptors. Pyridoxal 5'-phosphate serves as cofactor.

The protein localises to the cytoplasm. It carries out the reaction (sulfur carrier)-H + L-cysteine = (sulfur carrier)-SH + L-alanine. The protein operates within cofactor biosynthesis; iron-sulfur cluster biosynthesis. In terms of biological role, master enzyme that delivers sulfur to a number of partners involved in Fe-S cluster assembly, tRNA modification or cofactor biosynthesis. Catalyzes the removal of elemental sulfur atoms from cysteine to produce alanine. Functions as a sulfur delivery protein for Fe-S cluster synthesis onto IscU, an Fe-S scaffold assembly protein, as well as other S acceptor proteins. The chain is Cysteine desulfurase IscS from Colwellia psychrerythraea (strain 34H / ATCC BAA-681) (Vibrio psychroerythus).